The chain runs to 58 residues: Ribosome modulation factor (58 aa).

The segment at 1 to 28 (MKRQKRDRFERAHTQGFKAGLHGRSKDN) is disordered.

It belongs to the ribosome modulation factor family.

Its subcellular location is the cytoplasm. During stationary phase, converts 70S ribosomes to an inactive dimeric form (100S ribosomes). The chain is Ribosome modulation factor from Idiomarina loihiensis (strain ATCC BAA-735 / DSM 15497 / L2-TR).